The sequence spans 117 residues: Large ribosomal subunit protein uL18 (117 aa).

The protein belongs to the universal ribosomal protein uL18 family. In terms of assembly, part of the 50S ribosomal subunit; part of the 5S rRNA/L5/L18/L25 subcomplex. Contacts the 5S and 23S rRNAs.

Functionally, this is one of the proteins that bind and probably mediate the attachment of the 5S RNA into the large ribosomal subunit, where it forms part of the central protuberance. The sequence is that of Large ribosomal subunit protein uL18 from Mannheimia succiniciproducens (strain KCTC 0769BP / MBEL55E).